A 251-amino-acid polypeptide reads, in one-letter code: Small ribosomal subunit protein uS3 (251 aa).

The KH type-2 domain maps to 39 to 111 (IRELINNFSK…DVDLNILEVK (73 aa)).

Belongs to the universal ribosomal protein uS3 family. Part of the 30S ribosomal subunit. Forms a tight complex with proteins S10 and S14.

Binds the lower part of the 30S subunit head. Binds mRNA in the 70S ribosome, positioning it for translation. In Phytoplasma sp. (strain STRAWB1), this protein is Small ribosomal subunit protein uS3.